A 351-amino-acid chain; its full sequence is Transaldolase (351 aa).

Lysine 138 serves as the catalytic Schiff-base intermediate with substrate.

Belongs to the transaldolase family. Type 2 subfamily.

It is found in the cytoplasm. It catalyses the reaction D-sedoheptulose 7-phosphate + D-glyceraldehyde 3-phosphate = D-erythrose 4-phosphate + beta-D-fructose 6-phosphate. Its pathway is carbohydrate degradation; pentose phosphate pathway; D-glyceraldehyde 3-phosphate and beta-D-fructose 6-phosphate from D-ribose 5-phosphate and D-xylulose 5-phosphate (non-oxidative stage): step 2/3. In terms of biological role, transaldolase is important for the balance of metabolites in the pentose-phosphate pathway. The protein is Transaldolase of Neisseria gonorrhoeae (strain ATCC 700825 / FA 1090).